The following is a 278-amino-acid chain: Protein FixR (278 aa).

Residue 40-64 (LLTGASRGIGHATAKLFSEAGWRII) coordinates NAD(+). Ser-175 is a substrate binding site. The active-site Proton acceptor is the Tyr-189.

Belongs to the short-chain dehydrogenases/reductases (SDR) family.

In Bradyrhizobium diazoefficiens (strain JCM 10833 / BCRC 13528 / IAM 13628 / NBRC 14792 / USDA 110), this protein is Protein FixR (fixR).